The primary structure comprises 86 residues: ATP synthase subunit c (86 aa).

2 helical membrane-spanning segments follow: residues 8–28 (VLGCSAIGAGLAMIAGIGPGI) and 64–84 (TTGLYGFAVAIILLFANPLLG).

Belongs to the ATPase C chain family. As to quaternary structure, F-type ATPases have 2 components, F(1) - the catalytic core - and F(0) - the membrane proton channel. F(1) has five subunits: alpha(3), beta(3), gamma(1), delta(1), epsilon(1). F(0) has three main subunits: a(1), b(2) and c(10-14). The alpha and beta chains form an alternating ring which encloses part of the gamma chain. F(1) is attached to F(0) by a central stalk formed by the gamma and epsilon chains, while a peripheral stalk is formed by the delta and b chains.

The protein resides in the cell membrane. F(1)F(0) ATP synthase produces ATP from ADP in the presence of a proton or sodium gradient. F-type ATPases consist of two structural domains, F(1) containing the extramembraneous catalytic core and F(0) containing the membrane proton channel, linked together by a central stalk and a peripheral stalk. During catalysis, ATP synthesis in the catalytic domain of F(1) is coupled via a rotary mechanism of the central stalk subunits to proton translocation. In terms of biological role, key component of the F(0) channel; it plays a direct role in translocation across the membrane. A homomeric c-ring of between 10-14 subunits forms the central stalk rotor element with the F(1) delta and epsilon subunits. The polypeptide is ATP synthase subunit c (Lachnoclostridium phytofermentans (strain ATCC 700394 / DSM 18823 / ISDg) (Clostridium phytofermentans)).